A 243-amino-acid chain; its full sequence is UPF0246 protein SpyM3_1790 (243 aa).

Belongs to the UPF0246 family.

The polypeptide is UPF0246 protein SpyM3_1790 (Streptococcus pyogenes serotype M3 (strain ATCC BAA-595 / MGAS315)).